Here is a 472-residue protein sequence, read N- to C-terminus: Lactate utilization protein B (472 aa).

4Fe-4S ferredoxin-type domains are found at residues 304-334 (GTEF…GHSY) and 353-382 (YDDY…LHEL). Residues cysteine 313, cysteine 316, cysteine 319, cysteine 323, cysteine 366, cysteine 369, and cysteine 373 each contribute to the [4Fe-4S] cluster site.

The protein belongs to the LutB/YkgF family.

Is involved in L-lactate degradation and allows cells to grow with lactate as the sole carbon source. Has probably a role as an electron transporter during oxidation of L-lactate. This chain is Lactate utilization protein B, found in Anoxybacillus flavithermus (strain DSM 21510 / WK1).